Here is a 762-residue protein sequence, read N- to C-terminus: Molybdenum cofactor sulfurase 2 (762 aa).

The residue at position 234 (lysine 234) is an N6-(pyridoxal phosphate)lysine. Cysteine 400 is an active-site residue. In terms of domain architecture, MOSC spans 590-738; sequence AWISKALRMP…LECGSILEPV (149 aa).

Belongs to the class-V pyridoxal-phosphate-dependent aminotransferase family. MOCOS subfamily. Pyridoxal 5'-phosphate serves as cofactor.

The enzyme catalyses Mo-molybdopterin + L-cysteine + AH2 = thio-Mo-molybdopterin + L-alanine + A + H2O. Its function is as follows. Sulfurates the molybdenum cofactor. Sulfation of molybdenum is essential for xanthine dehydrogenase (XDH) and aldehyde oxidase (ADO) enzymes in which molybdenum cofactor is liganded by 1 oxygen and 1 sulfur atom in active form. The sequence is that of Molybdenum cofactor sulfurase 2 from Aedes aegypti (Yellowfever mosquito).